A 159-amino-acid chain; its full sequence is Transcription elongation factor GreA (159 aa).

The protein belongs to the GreA/GreB family.

Functionally, necessary for efficient RNA polymerase transcription elongation past template-encoded arresting sites. The arresting sites in DNA have the property of trapping a certain fraction of elongating RNA polymerases that pass through, resulting in locked ternary complexes. Cleavage of the nascent transcript by cleavage factors such as GreA or GreB allows the resumption of elongation from the new 3'terminus. GreA releases sequences of 2 to 3 nucleotides. The protein is Transcription elongation factor GreA of Orientia tsutsugamushi (strain Ikeda) (Rickettsia tsutsugamushi).